The sequence spans 277 residues: MTAPIPVVVAGALGRMGAEVIKAVVGAEDCSLVGAIDNTPGKEGADVGLELGLGELEVAVTADFEGCLCAVSQSVRDSGSGAVLVDFTHPSVVYEHTRAAIAYGVHPVIGTTGLSPEQLNDLTEFSAKASVGGAVIPNFSVGMVLLQQAAAAAARFYDHAELTELHHNRKADAPSGTCIKTAELMEELGKSFNPEEVDEHESLAGCRGGQRDSGLRLHSVRLPGLVAHQEVMFGAPGETYTLRHDTIDRSAYMPGVLLTVRKVGNLGSLVYGLERLI.

NAD(+) is bound by residues 11-16 (GALGRM) and 110-112 (GTT). His166 (proton donor/acceptor) is an active-site residue. His167 contributes to the (S)-2,3,4,5-tetrahydrodipicolinate binding site. The Proton donor role is filled by Lys170. 176-177 (GT) contacts (S)-2,3,4,5-tetrahydrodipicolinate.

The protein belongs to the DapB family.

Its subcellular location is the cytoplasm. The catalysed reaction is (S)-2,3,4,5-tetrahydrodipicolinate + NAD(+) + H2O = (2S,4S)-4-hydroxy-2,3,4,5-tetrahydrodipicolinate + NADH + H(+). It carries out the reaction (S)-2,3,4,5-tetrahydrodipicolinate + NADP(+) + H2O = (2S,4S)-4-hydroxy-2,3,4,5-tetrahydrodipicolinate + NADPH + H(+). It participates in amino-acid biosynthesis; L-lysine biosynthesis via DAP pathway; (S)-tetrahydrodipicolinate from L-aspartate: step 4/4. In terms of biological role, catalyzes the conversion of 4-hydroxy-tetrahydrodipicolinate (HTPA) to tetrahydrodipicolinate. This Synechococcus sp. (strain CC9605) protein is 4-hydroxy-tetrahydrodipicolinate reductase.